The following is a 174-amino-acid chain: Probable NAD(P)H dehydrogenase subunit CRR3, chloroplastic (174 aa).

Residues 1–54 (MAVLSTIYSITRASTPTMASLTNDSPSPLPSSSPSKLPSPTSPSKKPLKLRQVS) constitute a chloroplast transit peptide. Over residues 14–24 (STPTMASLTND) the composition is skewed to polar residues. A disordered region spans residues 14–71 (STPTMASLTNDSPSPLPSSSPSKLPSPTSPSKKPLKLRQVSKQMGSQNQQRRGNKPSI). A compositionally biased stretch (low complexity) spans 30-45 (PSSSPSKLPSPTSPSK). The span at 53–64 (VSKQMGSQNQQR) shows a compositional bias: polar residues. Residues 140-160 (FTIQWILPIWIMSLLVACGVI) traverse the membrane as a helical segment.

The protein localises to the plastid. Its subcellular location is the chloroplast thylakoid membrane. Functionally, probable subunit of the chloroplast NAD(P)H dehydrogenase (NDH) complex of the photosynthetic electron transport chain. Required for both formation and activity of NDH. May function in assembly or stabilization of the NDH complex. The polypeptide is Probable NAD(P)H dehydrogenase subunit CRR3, chloroplastic (Arabidopsis thaliana (Mouse-ear cress)).